An 87-amino-acid chain; its full sequence is CRISPR-associated endoribonuclease Cas2 (87 aa).

A Mg(2+)-binding site is contributed by D8.

This sequence belongs to the CRISPR-associated endoribonuclease Cas2 protein family. Homodimer, forms a heterotetramer with a Cas1 homodimer. It depends on Mg(2+) as a cofactor.

In terms of biological role, CRISPR (clustered regularly interspaced short palindromic repeat), is an adaptive immune system that provides protection against mobile genetic elements (viruses, transposable elements and conjugative plasmids). CRISPR clusters contain sequences complementary to antecedent mobile elements and target invading nucleic acids. CRISPR clusters are transcribed and processed into CRISPR RNA (crRNA). Functions as a ssRNA-specific endoribonuclease. Involved in the integration of spacer DNA into the CRISPR cassette. The chain is CRISPR-associated endoribonuclease Cas2 from Frankia alni (strain DSM 45986 / CECT 9034 / ACN14a).